The sequence spans 475 residues: Lactate utilization protein B (475 aa).

2 consecutive 4Fe-4S ferredoxin-type domains span residues 304–334 and 353–382; these read GTEFQAALHCIRCAACINVCPVYRHVGGHSY and YEDHKELPYASSLCAACTDACPVKIPLHEL. [4Fe-4S] cluster-binding residues include cysteine 313, cysteine 316, cysteine 319, cysteine 323, cysteine 366, cysteine 369, and cysteine 373.

The protein belongs to the LutB/YkgF family.

In terms of biological role, is involved in L-lactate degradation and allows cells to grow with lactate as the sole carbon source. Has probably a role as an electron transporter during oxidation of L-lactate. This chain is Lactate utilization protein B, found in Shouchella clausii (strain KSM-K16) (Alkalihalobacillus clausii).